Reading from the N-terminus, the 454-residue chain is tRNA-2-methylthio-N(6)-dimethylallyladenosine synthase (454 aa).

Residues 11–128 (KKLYIQTHGC…LPEMIETPRE (118 aa)) form the MTTase N-terminal domain. [4Fe-4S] cluster-binding residues include Cys20, Cys57, Cys91, Cys165, Cys169, and Cys172. The Radical SAM core domain occupies 151–382 (EADGATAFVS…QTRIIQQAQE (232 aa)). Residues 385–449 (RRMVGNTERV…PNSLRGVLLG (65 aa)) form the TRAM domain.

The protein belongs to the methylthiotransferase family. MiaB subfamily. In terms of assembly, monomer. The cofactor is [4Fe-4S] cluster.

It is found in the cytoplasm. It catalyses the reaction N(6)-dimethylallyladenosine(37) in tRNA + (sulfur carrier)-SH + AH2 + 2 S-adenosyl-L-methionine = 2-methylsulfanyl-N(6)-dimethylallyladenosine(37) in tRNA + (sulfur carrier)-H + 5'-deoxyadenosine + L-methionine + A + S-adenosyl-L-homocysteine + 2 H(+). In terms of biological role, catalyzes the methylthiolation of N6-(dimethylallyl)adenosine (i(6)A), leading to the formation of 2-methylthio-N6-(dimethylallyl)adenosine (ms(2)i(6)A) at position 37 in tRNAs that read codons beginning with uridine. The chain is tRNA-2-methylthio-N(6)-dimethylallyladenosine synthase from Saccharophagus degradans (strain 2-40 / ATCC 43961 / DSM 17024).